The chain runs to 360 residues: tRNA (guanine-N(7)-)-methyltransferase (360 aa).

The segment at 1–32 (MTPPPPKRQKRDEYRKATAEAASQPGPSDVAE) is disordered. S-adenosyl-L-methionine is bound by residues G99 and 122 to 123 (EI). Residues 177-196 (ADAASPVLSTDTEHTPTTLV) form a disordered region. A compositionally biased stretch (polar residues) spans 183-196 (VLSTDTEHTPTTLV). S-adenosyl-L-methionine contacts are provided by residues 209–210 (NT) and C229. D232 is a catalytic residue. 332 to 334 (TEE) provides a ligand contact to S-adenosyl-L-methionine.

The protein belongs to the class I-like SAM-binding methyltransferase superfamily. TrmB family. In terms of assembly, forms a complex with trm82.

It is found in the nucleus. The catalysed reaction is guanosine(46) in tRNA + S-adenosyl-L-methionine = N(7)-methylguanosine(46) in tRNA + S-adenosyl-L-homocysteine. It functions in the pathway tRNA modification; N(7)-methylguanine-tRNA biosynthesis. Catalyzes the formation of N(7)-methylguanine at position 46 (m7G46) in tRNA. The chain is tRNA (guanine-N(7)-)-methyltransferase (trm8) from Neosartorya fischeri (strain ATCC 1020 / DSM 3700 / CBS 544.65 / FGSC A1164 / JCM 1740 / NRRL 181 / WB 181) (Aspergillus fischerianus).